A 465-amino-acid polypeptide reads, in one-letter code: Glucose-1-phosphate adenylyltransferase (465 aa).

Residues G164, 181-182 (EK), and S199 each bind alpha-D-glucose 1-phosphate.

It belongs to the bacterial/plant glucose-1-phosphate adenylyltransferase family. In terms of assembly, homotetramer.

It catalyses the reaction alpha-D-glucose 1-phosphate + ATP + H(+) = ADP-alpha-D-glucose + diphosphate. Its pathway is glycan biosynthesis; glycogen biosynthesis. Involved in the biosynthesis of ADP-glucose, a building block required for the elongation reactions to produce glycogen. Catalyzes the reaction between ATP and alpha-D-glucose 1-phosphate (G1P) to produce pyrophosphate and ADP-Glc. The sequence is that of Glucose-1-phosphate adenylyltransferase from Arthrobacter sp. (strain FB24).